The following is a 485-amino-acid chain: Aspartyl/glutamyl-tRNA(Asn/Gln) amidotransferase subunit B (485 aa).

This sequence belongs to the GatB/GatE family. GatB subfamily. As to quaternary structure, heterotrimer of A, B and C subunits.

The enzyme catalyses L-glutamyl-tRNA(Gln) + L-glutamine + ATP + H2O = L-glutaminyl-tRNA(Gln) + L-glutamate + ADP + phosphate + H(+). It carries out the reaction L-aspartyl-tRNA(Asn) + L-glutamine + ATP + H2O = L-asparaginyl-tRNA(Asn) + L-glutamate + ADP + phosphate + 2 H(+). Functionally, allows the formation of correctly charged Asn-tRNA(Asn) or Gln-tRNA(Gln) through the transamidation of misacylated Asp-tRNA(Asn) or Glu-tRNA(Gln) in organisms which lack either or both of asparaginyl-tRNA or glutaminyl-tRNA synthetases. The reaction takes place in the presence of glutamine and ATP through an activated phospho-Asp-tRNA(Asn) or phospho-Glu-tRNA(Gln). This chain is Aspartyl/glutamyl-tRNA(Asn/Gln) amidotransferase subunit B, found in Methylacidiphilum infernorum (isolate V4) (Methylokorus infernorum (strain V4)).